A 248-amino-acid chain; its full sequence is Probable transcriptional regulatory protein Plav_2114 (248 aa).

The protein belongs to the TACO1 family.

It is found in the cytoplasm. This is Probable transcriptional regulatory protein Plav_2114 from Parvibaculum lavamentivorans (strain DS-1 / DSM 13023 / NCIMB 13966).